A 365-amino-acid polypeptide reads, in one-letter code: DNA replication and repair protein RecF (365 aa).

Residue 30–37 (GLNAQGKT) participates in ATP binding.

It belongs to the RecF family.

It localises to the cytoplasm. The RecF protein is involved in DNA metabolism; it is required for DNA replication and normal SOS inducibility. RecF binds preferentially to single-stranded, linear DNA. It also seems to bind ATP. The chain is DNA replication and repair protein RecF from Chlamydia trachomatis serovar A (strain ATCC VR-571B / DSM 19440 / HAR-13).